The following is a 646-amino-acid chain: MDAYTVDGNAVSLPIYVAGYIALYDMGDGGELTLTRETVAAALPPASRLPINIDHRNGCVVGEVLSIVDDARGPFFLGIINCPQLGAVLATAAGPDFFGELSEGLSEQERLLYLVSNYLPSASLSSRRLGPDEEPDETLFAHVSLCVIGRRVGTIVTYDATPENAVAPFKRLSPSSREELLITAREAQSRLGDAATWHLSEDTLTRVLLSTAVNNMLLRNRWNLVARRRREAGIEGHTYLQASASFGITNGCNKADFCGAELVDTCGYKSGEKVHGAPYSRVTLGAKAFTSSSPNALPSSDNDKGGIGERTQKHISAMASSNPQTLSAAGAPLVSGDYILVPAAQYNQLVVGQHTSHPPINAGPAPVTHAVPSQYIPPAYNSLMPPSMYQAPPYWSVPHSANLEAQITALVGALAADRKATKGSDPHVIQGSQCSPPLSPQQERRYARKRRHDWDATTRDDLEGIYYPGERSPRPGERRAGRPSTTIADLMGAVSSLQQEVSQLRAIQTVTAQPQAAPAGLYKPIPAVPPQYSQYQYIQPQHAVSAIVAPQLPGIPSQPTQAVLAPQVPAGEAPGSAKVVAASTAPQQAEQARAAPQQFEAVTSAAVLPVTQPQASSQTVDASASTGLEFGRDDADIFVSQMMSAR.

Residues H55, S123, and H142 each act as charge relay system in the active site. The segment at 336 to 355 (GDYILVPAAQYNQLVVGQHT) is interaction with pAP. Residues 421–483 (TKGSDPHVIQ…RPGERRAGRP (63 aa)) form a disordered region. The Nuclear localization signal signature appears at 445 to 451 (RYARKRR). 2 stretches are compositionally biased toward basic and acidic residues: residues 452–462 (HDWDATTRDDL) and 471–480 (RSPRPGERRA). The interval 626-646 (TGLEFGRDDADIFVSQMMSAR) is interaction with major capsid protein.

This sequence belongs to the herpesviridae capsid scaffolding protein family. Homomultimer. Interacts with major capsid protein. As to quaternary structure, exists in a monomer-dimer equilibrium with the dimer being the active species. Capsid scaffolding protein is cleaved by assemblin after formation of the spherical procapsid. As a result, the capsid obtains its mature, icosahedral shape. Cleavages occur at two or more sites: release (R-site) and maturation (M-site).

The protein localises to the host cytoplasm. Its subcellular location is the host nucleus. The catalysed reaction is Cleaves -Ala-|-Ser- and -Ala-|-Ala- bonds in the scaffold protein.. In terms of biological role, acts as a scaffold protein by binding major capsid protein in the cytoplasm, inducing the nuclear localization of both proteins. Multimerizes in the nucleus such as major capsid protein forms the icosahedral T=16 capsid. Autocatalytic cleavage releases the assembly protein, and subsequently abolishes interaction with major capsid protein. Cleavages products are evicted from the capsid before or during DNA packaging. Its function is as follows. Protease that plays an essential role in virion assembly within the nucleus. Catalyzes the cleavage of the assembly protein after formation of the spherical procapsid. By that cleavage, the capsid matures and gains its icosahedral shape. The cleavage sites seem to include -Ala-Ser-, -Ala-Ala-, as well as Ala-Thr bonds. Assemblin and cleavages products are evicted from the capsid before or during DNA packaging. Functionally, plays a major role in capsid assembly. Acts as a scaffold protein by binding major capsid protein. Multimerizes in the nucleus such as major capsid protein forms the icosahedral T=16 capsid. Cleaved by assemblin after capsid completion. The cleavages products are evicted from the capsid before or during DNA packaging. The protein is Capsid scaffolding protein (35) of Equus caballus (Horse).